Here is a 78-residue protein sequence, read N- to C-terminus: Large ribosomal subunit protein bL28 (78 aa).

Belongs to the bacterial ribosomal protein bL28 family.

This is Large ribosomal subunit protein bL28 from Synechococcus sp. (strain CC9605).